A 405-amino-acid polypeptide reads, in one-letter code: Arginine biosynthesis bifunctional protein ArgJ (405 aa).

Residues Thr-152, Lys-178, Thr-189, Glu-276, Asn-400, and Thr-405 each coordinate substrate. Residue Thr-189 is the Nucleophile of the active site.

This sequence belongs to the ArgJ family. As to quaternary structure, heterotetramer of two alpha and two beta chains.

Its subcellular location is the cytoplasm. The catalysed reaction is N(2)-acetyl-L-ornithine + L-glutamate = N-acetyl-L-glutamate + L-ornithine. The enzyme catalyses L-glutamate + acetyl-CoA = N-acetyl-L-glutamate + CoA + H(+). Its pathway is amino-acid biosynthesis; L-arginine biosynthesis; L-ornithine and N-acetyl-L-glutamate from L-glutamate and N(2)-acetyl-L-ornithine (cyclic): step 1/1. The protein operates within amino-acid biosynthesis; L-arginine biosynthesis; N(2)-acetyl-L-ornithine from L-glutamate: step 1/4. In terms of biological role, catalyzes two activities which are involved in the cyclic version of arginine biosynthesis: the synthesis of N-acetylglutamate from glutamate and acetyl-CoA as the acetyl donor, and of ornithine by transacetylation between N(2)-acetylornithine and glutamate. This chain is Arginine biosynthesis bifunctional protein ArgJ, found in Pseudomonas putida (strain ATCC 47054 / DSM 6125 / CFBP 8728 / NCIMB 11950 / KT2440).